The primary structure comprises 145 residues: D-aminoacyl-tRNA deacylase (145 aa).

Positions 137-138 (GP) match the Gly-cisPro motif, important for rejection of L-amino acids motif.

Belongs to the DTD family. In terms of assembly, homodimer.

The protein resides in the cytoplasm. The catalysed reaction is glycyl-tRNA(Ala) + H2O = tRNA(Ala) + glycine + H(+). It carries out the reaction a D-aminoacyl-tRNA + H2O = a tRNA + a D-alpha-amino acid + H(+). In terms of biological role, an aminoacyl-tRNA editing enzyme that deacylates mischarged D-aminoacyl-tRNAs. Also deacylates mischarged glycyl-tRNA(Ala), protecting cells against glycine mischarging by AlaRS. Acts via tRNA-based rather than protein-based catalysis; rejects L-amino acids rather than detecting D-amino acids in the active site. By recycling D-aminoacyl-tRNA to D-amino acids and free tRNA molecules, this enzyme counteracts the toxicity associated with the formation of D-aminoacyl-tRNA entities in vivo and helps enforce protein L-homochirality. In Pseudoalteromonas atlantica (strain T6c / ATCC BAA-1087), this protein is D-aminoacyl-tRNA deacylase.